Reading from the N-terminus, the 298-residue chain is Heme A synthase (298 aa).

Residues 1-6 (MHRSLK) are Cytoplasmic-facing. A helical membrane pass occupies residues 7–27 (IFGTLTSIGMVIVLMQGALVT). The Extracellular portion of the chain corresponds to 28-62 (KTESGEGCGATWPLCFGEVIPTNPAIETIIEYSHR). Cysteines 35 and 42 form a disulfide. The active site involves glutamate 58. Histidine 61 contacts heme o. The helical transmembrane segment at 63–83 (IVSGLLGAMVIILAIWAWRKL) threads the bilayer. At 84–92 (SHIRETKVM) the chain is on the cytoplasmic side. A helical membrane pass occupies residues 93-113 (AILAVLFIIFQGLLGAGAVVF). Residues 114–117 (GQSH) are Extracellular-facing. A helical membrane pass occupies residues 118-138 (AILALHFGISAISLATVVLLT). Heme o is bound at residue histidine 123. Topologically, residues 139-158 (TLAFEDGKPNPPALIVKKGY) are cytoplasmic. A helical transmembrane segment spans residues 159–179 (KGYILAVFAYCYAVIYTGAYV). Residues 180–209 (KHTQATLACGDFPLCNGQWIPMLSGPVGAH) are Extracellular-facing. Cysteine 188 and cysteine 194 are joined by a disulfide. The helical transmembrane segment at 210–230 (FFHRVAGTLLLILLVVALIWT) threads the bilayer. Histidine 212 serves as a coordination point for heme b. Topologically, residues 231–244 (LRKYSHYRSLVWTH) are cytoplasmic. Residues 245 to 265 (ILCVILVLTQYATGISIVLTG) traverse the membrane as a helical segment. At 266–271 (NELFVA) the chain is on the extracellular side. A helical transmembrane segment spans residues 272 to 292 (MMHALIVSILFTTLCYIVMIL). Histidine 274 contacts heme b. Over 293 to 298 (SRNKAV) the chain is Cytoplasmic.

This sequence belongs to the COX15/CtaA family. Type 1 subfamily. As to quaternary structure, interacts with CtaB. The cofactor is heme b.

The protein localises to the cell membrane. The catalysed reaction is Fe(II)-heme o + 2 A + H2O = Fe(II)-heme a + 2 AH2. Its pathway is porphyrin-containing compound metabolism; heme A biosynthesis; heme A from heme O: step 1/1. Its function is as follows. Catalyzes the conversion of heme O to heme A by two successive hydroxylations of the methyl group at C8. The first hydroxylation forms heme I, the second hydroxylation results in an unstable dihydroxymethyl group, which spontaneously dehydrates, resulting in the formyl group of heme A. This is Heme A synthase from Halalkalibacterium halodurans (strain ATCC BAA-125 / DSM 18197 / FERM 7344 / JCM 9153 / C-125) (Bacillus halodurans).